We begin with the raw amino-acid sequence, 101 residues long: Putative antitoxin HigA2 (101 aa).

The HTH cro/C1-type domain occupies L35–T90. Positions Q46–N65 form a DNA-binding region, H-T-H motif.

Its function is as follows. Putative antitoxin component of a type II toxin-antitoxin (TA) system. Its cognate toxin would be HigB2. This is Putative antitoxin HigA2 from Mycobacterium tuberculosis (strain ATCC 25618 / H37Rv).